The primary structure comprises 538 residues: [Pyruvate dehydrogenase [acetyl-transferring]]-phosphatase 1, mitochondrial (538 aa).

The N-terminal 71 residues, 1-71 (MPAPTQLFFP…WWQYTQGRRY (71 aa)), are a transit peptide targeting the mitochondrion. The PPM-type phosphatase domain occupies 109-525 (VLGFDSNQLP…DDITIIVVQF (417 aa)). Positions 144 and 145 each coordinate Mn(2+). K202 carries the N6-acetyllysine modification. Residues D418 and D516 each contribute to the Mn(2+) site.

The protein belongs to the PP2C family. As to quaternary structure, heterodimer of a catalytic (PDP1) and a regulatory (PDPR) subunit. Mn(2+) serves as cofactor. The cofactor is Mg(2+).

The protein localises to the mitochondrion. It catalyses the reaction O-phospho-L-seryl-[pyruvate dehydrogenase E1 alpha subunit] + H2O = L-seryl-[pyruvate dehydrogenase E1 alpha subunit] + phosphate. Its activity is regulated as follows. Magnesium-dependent and calcium-stimulated. PDP1 activity strongly depends on its Ca(2+)-dependent binding to the lipoyl domain of E2 subunit of component of the pyruvate dehydrogenase complex. Its function is as follows. Mitochondrial enzyme that catalyzes the dephosphorylation and concomitant reactivation of the alpha subunit of the E1 component of the pyruvate dehydrogenase complex (PDC), thereby stimulating the conversion of pyruvate into acetyl-CoA. The polypeptide is [Pyruvate dehydrogenase [acetyl-transferring]]-phosphatase 1, mitochondrial (PDP1) (Bos taurus (Bovine)).